The following is a 434-amino-acid chain: Trigger factor (434 aa).

Positions 161–246 constitute a PPIase FKBP-type domain; that stretch reads EDRATIDFSG…LKKVEERELP (86 aa).

Belongs to the FKBP-type PPIase family. Tig subfamily.

Its subcellular location is the cytoplasm. It carries out the reaction [protein]-peptidylproline (omega=180) = [protein]-peptidylproline (omega=0). Involved in protein export. Acts as a chaperone by maintaining the newly synthesized protein in an open conformation. Functions as a peptidyl-prolyl cis-trans isomerase. The chain is Trigger factor from Erwinia tasmaniensis (strain DSM 17950 / CFBP 7177 / CIP 109463 / NCPPB 4357 / Et1/99).